We begin with the raw amino-acid sequence, 432 residues long: Histidinol dehydrogenase (432 aa).

Positions 130, 191, and 214 each coordinate NAD(+). Substrate contacts are provided by S237, Q259, and H262. Residues Q259 and H262 each coordinate Zn(2+). Active-site proton acceptor residues include E327 and H328. Residues H328, D361, E415, and H420 each contribute to the substrate site. D361 contributes to the Zn(2+) binding site. Residue H420 coordinates Zn(2+).

Belongs to the histidinol dehydrogenase family. Zn(2+) serves as cofactor.

It carries out the reaction L-histidinol + 2 NAD(+) + H2O = L-histidine + 2 NADH + 3 H(+). It functions in the pathway amino-acid biosynthesis; L-histidine biosynthesis; L-histidine from 5-phospho-alpha-D-ribose 1-diphosphate: step 9/9. Functionally, catalyzes the sequential NAD-dependent oxidations of L-histidinol to L-histidinaldehyde and then to L-histidine. In Agrobacterium fabrum (strain C58 / ATCC 33970) (Agrobacterium tumefaciens (strain C58)), this protein is Histidinol dehydrogenase.